The sequence spans 654 residues: Chaperone protein DnaK (654 aa).

A Phosphothreonine; by autocatalysis modification is found at Thr205. Residues 592–654 (ELERQMQQIG…EVEILDDKKP (63 aa)) form a disordered region. Polar residues predominate over residues 608–621 (AGQSETQSTGPGSY). Positions 622–636 (QESSNQSSQHQTNNN) are enriched in low complexity.

The protein belongs to the heat shock protein 70 family.

Its function is as follows. Acts as a chaperone. The protein is Chaperone protein DnaK of Protochlamydia amoebophila (strain UWE25).